A 532-amino-acid chain; its full sequence is MSSQLAPIPILNQNASEERGEIARLSSFVGAIAITDLVKTTLGPKGMDKILISASNPNELIITNDGATILTKIYIDNPAAKILVDISRTQDDEVGDGTTSVCVLAGELLREGERLVQQKVHPQTIISGWRLALETARAALQSSTQDHSSDKVKFREDLLNIARTTLSSKILHTEKDHFANMVVDAVLRLNGNTNLDNIHIIKKSGGSLRESYLDEGFILEKKIGVGCPKRLENPKILIANTAMDTDKIKIFGGKVVVDSMTELAKMEDAEKEKMLNKCKKIVDHGINCFVNRQLVYNLPEQYFAEHGVMSIEHADFDGIERLALVTGAEIVSTFDHPELVKIGTCKLIEEVMIGEDKVIRFSGIPSGEACTIVLRGATSHILEEAERSIHDALCVLAVTVAETRTVLGAGCSEMIMSKAVDELAAITPGKKAMAIESFAKALRQIPTIIANNAGYDSSELVSQLKAAHHQGDKKAGLNMRDGCIGNAEELGVIESFKVKQQVLVSAHEAAEMIMRVDDILRAAPRQRSNLQH.

It belongs to the TCP-1 chaperonin family. Heterooligomeric complex of about 850 to 900 kDa that forms two stacked rings, 12 to 16 nm in diameter.

Its subcellular location is the cytoplasm. Molecular chaperone; assists the folding of proteins upon ATP hydrolysis. Known to play a role, in vitro, in the folding of actin and tubulin. This Dictyostelium discoideum (Social amoeba) protein is T-complex protein 1 subunit beta (cct2).